The sequence spans 310 residues: tRNA pseudouridine synthase B (310 aa).

Residue aspartate 47 is the Nucleophile of the active site.

The protein belongs to the pseudouridine synthase TruB family. Type 1 subfamily.

The catalysed reaction is uridine(55) in tRNA = pseudouridine(55) in tRNA. Its function is as follows. Responsible for synthesis of pseudouridine from uracil-55 in the psi GC loop of transfer RNAs. The polypeptide is tRNA pseudouridine synthase B (Psychromonas ingrahamii (strain DSM 17664 / CCUG 51855 / 37)).